The primary structure comprises 121 residues: Large ribosomal subunit protein bL12 (121 aa).

It belongs to the bacterial ribosomal protein bL12 family. As to quaternary structure, homodimer. Part of the ribosomal stalk of the 50S ribosomal subunit. Forms a multimeric L10(L12)X complex, where L10 forms an elongated spine to which 2 to 4 L12 dimers bind in a sequential fashion. Binds GTP-bound translation factors.

Its function is as follows. Forms part of the ribosomal stalk which helps the ribosome interact with GTP-bound translation factors. Is thus essential for accurate translation. This Salmonella agona (strain SL483) protein is Large ribosomal subunit protein bL12.